The sequence spans 232 residues: Phosphatidylserine decarboxylase proenzyme (232 aa).

Ser190 acts as the Schiff-base intermediate with substrate; via pyruvic acid in catalysis. Position 190 is a pyruvic acid (Ser); by autocatalysis (Ser190).

The protein belongs to the phosphatidylserine decarboxylase family. PSD-A subfamily. As to quaternary structure, heterodimer of a large membrane-associated beta subunit and a small pyruvoyl-containing alpha subunit. Pyruvate is required as a cofactor. Is synthesized initially as an inactive proenzyme. Formation of the active enzyme involves a self-maturation process in which the active site pyruvoyl group is generated from an internal serine residue via an autocatalytic post-translational modification. Two non-identical subunits are generated from the proenzyme in this reaction, and the pyruvate is formed at the N-terminus of the alpha chain, which is derived from the carboxyl end of the proenzyme. The post-translation cleavage follows an unusual pathway, termed non-hydrolytic serinolysis, in which the side chain hydroxyl group of the serine supplies its oxygen atom to form the C-terminus of the beta chain, while the remainder of the serine residue undergoes an oxidative deamination to produce ammonia and the pyruvoyl prosthetic group on the alpha chain.

It localises to the cell membrane. The enzyme catalyses a 1,2-diacyl-sn-glycero-3-phospho-L-serine + H(+) = a 1,2-diacyl-sn-glycero-3-phosphoethanolamine + CO2. Its pathway is phospholipid metabolism; phosphatidylethanolamine biosynthesis; phosphatidylethanolamine from CDP-diacylglycerol: step 2/2. Its function is as follows. Catalyzes the formation of phosphatidylethanolamine (PtdEtn) from phosphatidylserine (PtdSer). This chain is Phosphatidylserine decarboxylase proenzyme, found in Bartonella bacilliformis (strain ATCC 35685 / KC583 / Herrer 020/F12,63).